A 361-amino-acid chain; its full sequence is Cytochrome c peroxidase, mitochondrial (361 aa).

The N-terminal 67 residues, 1–67, are a transit peptide targeting the mitochondrion; sequence MTTAVRLLPS…NWGKAAALAS (67 aa). His119 functions as the Proton acceptor in the catalytic mechanism. Tyr220 is modified (phosphotyrosine). His242 is a heme b binding site. Residue Trp258 is the Tryptophan radical intermediate of the active site.

The protein belongs to the peroxidase family. Cytochrome c peroxidase subfamily. In terms of assembly, forms a one-to-one complex with cytochrome c. Requires heme b as cofactor. Post-translationally, CCP1 precursor is processed by the rhomboid protease PCP1, which cleaves the N-terminal hydrophobic transit peptide. The m-AAA protease (composed of YTA12/RCA1 and YTA10/AFG3) is required for CCP1 maturation: m-AAA protease promotes membrane dislocation of the CCP1 transmembrane segment within the transit peptide to ensure the correct positioning of CCP1 within the membrane bilayer, allowing intramembrane cleavage by PCP1.

Its subcellular location is the mitochondrion matrix. It localises to the mitochondrion intermembrane space. It carries out the reaction 2 Fe(II)-[cytochrome c] + H2O2 + 2 H(+) = 2 Fe(III)-[cytochrome c] + 2 H2O. In terms of biological role, destroys radicals which are normally produced within the cells and which are toxic to biological systems. The sequence is that of Cytochrome c peroxidase, mitochondrial (CCP1) from Saccharomyces cerevisiae (strain ATCC 204508 / S288c) (Baker's yeast).